Reading from the N-terminus, the 381-residue chain is Flap endonuclease 1 (381 aa).

Residues 1 to 105 form an N-domain region; sequence MGVKGLNQLI…GELEKRLLKR (105 aa). Mg(2+) is bound at residue aspartate 34. Residues arginine 47 and arginine 71 each contribute to the DNA site. 5 residues coordinate Mg(2+): aspartate 87, glutamate 159, glutamate 161, aspartate 180, and aspartate 182. The I-domain stretch occupies residues 123 to 254; sequence EVMKFEKRLV…VTAYKLIKEH (132 aa). Glutamate 159 contacts DNA. DNA is bound by residues glycine 232 and aspartate 234. A Mg(2+)-binding site is contributed by aspartate 234. The tract at residues 340–348 is interaction with PCNA; sequence VQGRLDGFF. The tract at residues 354–381 is disordered; it reads PGAKAGDKKGDKKRGSDSKASNNKKKRK. The segment covering 358 to 370 has biased composition (basic and acidic residues); the sequence is AGDKKGDKKRGSD.

This sequence belongs to the XPG/RAD2 endonuclease family. FEN1 subfamily. In terms of assembly, interacts with PCNA. Three molecules of FEN1 bind to one PCNA trimer with each molecule binding to one PCNA monomer. PCNA stimulates the nuclease activity without altering cleavage specificity. The cofactor is Mg(2+). In terms of processing, phosphorylated. Phosphorylation upon DNA damage induces relocalization to the nuclear plasma.

It localises to the nucleus. The protein localises to the nucleolus. Its subcellular location is the nucleoplasm. It is found in the mitochondrion. Structure-specific nuclease with 5'-flap endonuclease and 5'-3' exonuclease activities involved in DNA replication and repair. During DNA replication, cleaves the 5'-overhanging flap structure that is generated by displacement synthesis when DNA polymerase encounters the 5'-end of a downstream Okazaki fragment. It enters the flap from the 5'-end and then tracks to cleave the flap base, leaving a nick for ligation. Also involved in the long patch base excision repair (LP-BER) pathway, by cleaving within the apurinic/apyrimidinic (AP) site-terminated flap. Acts as a genome stabilization factor that prevents flaps from equilibrating into structures that lead to duplications and deletions. Also possesses 5'-3' exonuclease activity on nicked or gapped double-stranded DNA, and exhibits RNase H activity. Also involved in replication and repair of rDNA and in repairing mitochondrial DNA. The polypeptide is Flap endonuclease 1 (Scheffersomyces stipitis (strain ATCC 58785 / CBS 6054 / NBRC 10063 / NRRL Y-11545) (Yeast)).